We begin with the raw amino-acid sequence, 251 residues long: Chlorocatechol 1,2-dioxygenase (251 aa).

Residues Tyr-130, Tyr-164, His-188, and His-190 each coordinate Fe cation.

It belongs to the intradiol ring-cleavage dioxygenase family. It depends on Fe(3+) as a cofactor.

It carries out the reaction 3-chlorocatechol + O2 = (2E,4Z)-2-chloromuconate + 2 H(+). The enzyme catalyses 3,4-dichlorocatechol + O2 = (2Z,4Z)-2,3-dichloromuconate + 2 H(+). It catalyses the reaction 3,5-dichlorocatechol + O2 = (2E,4E)-2,4-dichloromuconate + 2 H(+). The catalysed reaction is 3,6-dichlorocatechol + O2 = (2E,4E)-2,5-dichloromuconate + H(+). It carries out the reaction 3,4,6-trichlorocatechol + O2 = (2Z,4E)-2,3,5-trichloromuconate + H(+). It functions in the pathway xenobiotic degradation. Its function is as follows. Chlorocatechol 1,2-dioxygenase involved in the degradation of chlorinated benzenes, that occurs via chlorocatechol intermediates. Displays broad substrate specificity. Preferentially cleaves 3-chlorocatechol and 3,4-dichlorocatechol, and shows lower activity on 3,5-dichlorocatechol, 3,6-dichlorocatechol and 3,4,6-trichlorocatechol in vitro. Is not able to convert 3,4,5-trichlorocatechol and 3,4,5,6-tetrachlorocatechol. Thus, probably functions in the degradation pathways of 1,2-dichlorobenzene, 1,4-dichlorobenzene and 1,2,4-trichlorobenzene (via 3,4-dichlorocatechol, 3,6-dichlorocatechol and 3,4,6-trichlorocatechol intermediates, respectively), which allow Pseudomonas sp. strain P51 to grow on these substrates as the sole carbon and energy source. The chain is Chlorocatechol 1,2-dioxygenase from Pseudomonas sp. (strain P51).